A 379-amino-acid chain; its full sequence is Carbamoyl phosphate synthase small chain (379 aa).

The interval 1–189 (MSKSALLVLE…GLPEAKADSE (189 aa)) is CPSase. Positions 47, 241, and 243 each coordinate L-glutamine. Positions 193 to 379 (HVVAYDFGAK…FIELIKQFRA (187 aa)) constitute a Glutamine amidotransferase type-1 domain. Cys269 serves as the catalytic Nucleophile. Residues Leu270, Gln273, Asn311, Gly313, and Phe314 each contribute to the L-glutamine site. Active-site residues include His353 and Glu355.

Belongs to the CarA family. Composed of two chains; the small (or glutamine) chain promotes the hydrolysis of glutamine to ammonia, which is used by the large (or ammonia) chain to synthesize carbamoyl phosphate. Tetramer of heterodimers (alpha,beta)4.

The catalysed reaction is hydrogencarbonate + L-glutamine + 2 ATP + H2O = carbamoyl phosphate + L-glutamate + 2 ADP + phosphate + 2 H(+). It carries out the reaction L-glutamine + H2O = L-glutamate + NH4(+). It functions in the pathway amino-acid biosynthesis; L-arginine biosynthesis; carbamoyl phosphate from bicarbonate: step 1/1. It participates in pyrimidine metabolism; UMP biosynthesis via de novo pathway; (S)-dihydroorotate from bicarbonate: step 1/3. Functionally, small subunit of the glutamine-dependent carbamoyl phosphate synthetase (CPSase). CPSase catalyzes the formation of carbamoyl phosphate from the ammonia moiety of glutamine, carbonate, and phosphate donated by ATP, constituting the first step of 2 biosynthetic pathways, one leading to arginine and/or urea and the other to pyrimidine nucleotides. The small subunit (glutamine amidotransferase) binds and cleaves glutamine to supply the large subunit with the substrate ammonia. The protein is Carbamoyl phosphate synthase small chain of Vibrio cholerae serotype O1 (strain ATCC 39315 / El Tor Inaba N16961).